We begin with the raw amino-acid sequence, 200 residues long: Blue fluorescence protein (200 aa).

Lumazine-binding repeat units follow at residues 1–111 (MFKG…TGGR) and 112–200 (SLSG…AGNW).

In terms of assembly, monomer.

It is found in the cytoplasm. In terms of biological role, blue fluorescence protein (BFP) that can bind 6,7-dimethyl-8-ribityllumazine, riboflavin, and 6-methyl-7-oxo-8-ribityllumazine as a bound fluorophore. Has no riboflavin-synthase activity. In Aliivibrio fischeri (Vibrio fischeri), this protein is Blue fluorescence protein.